We begin with the raw amino-acid sequence, 243 residues long: PKPPAEAKPAAKPAAPPAAANPFEGVDVKDPIVISAATRIQASFRMHKNRMALKEKSIPKFSQVLKDMFVMEGSAVTFFARVWGIPDPVIKWFKDGQEVKQGPKHEIKFDDKDGTFLIIRNADGDDVGTYTCQATNSFGEAFDSARLALEVPAKCTKQPDNITVKAGGNFEIKVEIAGEPEPDVIWTKGKKEIDEGGRFSYEDSPDYSILRVEKAQAGDAGKYEIEIVNDLGKARAYCTVKVN.

The interval 1–22 is disordered; sequence PKPPAEAKPAAKPAAPPAAANP. Residues 7–20 show a composition bias toward low complexity; sequence AKPAAKPAAPPAAA. The IQ domain occupies 35-62; it reads SAATRIQASFRMHKNRMALKEKSIPKFS. 2 Ig-like C2-type domains span residues 59–150 and 151–243; these read PKFS…LALE and VPAK…VKVN.

In terms of biological role, this protein is the target of CAVP, which binds to it in a calcium-dependent manner. The protein is CAVP-target protein of Branchiostoma lanceolatum (Common lancelet).